The sequence spans 92 residues: Cytochrome c2 (92 aa).

Heme c is bound by residues Cys12, Cys15, His16, and Met66.

It belongs to the cytochrome c family. Post-translationally, binds 1 heme c group covalently per subunit.

In terms of biological role, cytochrome c2 is found mainly in purple, non-sulfur, photosynthetic bacteria where it functions as the electron donor to the oxidized bacteriochlorophyll in the photophosphorylation pathway. However, it may also have a role in the respiratory chain and is found in some non-photosynthetic bacteria. In Rhodocyclus tenuis (Rhodospirillum tenue), this protein is Cytochrome c2.